A 536-amino-acid chain; its full sequence is ATP synthase subunit alpha, mitochondrial (536 aa).

The transit peptide at 1 to 24 (MFKNALRRAGVAAPRISRVAQRGY) directs the protein to the mitochondrion. ATP is bound at residue 195–202 (GDRQTGKT).

As to quaternary structure, F-type ATP synthases have 2 components, the catalytic core F(1) and the membrane-embedded component F(0), linked together by a central stalk and a peripheral stalk. The central stalk, also called rotor shaft, is often seen as part of F(1). The peripheral stalk is seen as part of F(0). F(0) contains the membrane channel next to the rotor. F-type ATP synthases form dimers but each monomer functions independently in ATP generation. The dimer consists of 17 different polypeptides: ATP1 (subunit alpha, 3 molecules per monomer, part of F(1)), ATP2 (subunit beta, 3 copies per monomer, part of F(1)), ATP3 (subunit gamma, part of the central stalk), ATP4 (subunit b, part of the peripheral stalk), ATP5/OSCP (subunit 5/OSCP, part of the peripheral stalk), ATP6 (subunit a, part of the peripheral stalk), ATP7 (subunit d, part of the peripheral stalk), ATP8 (subunit 8, part of the peripheral stalk), OLI1 (subunit c, part of the rotor, 10 molecules per monomer), ATP14 (subunit h, part of the peripheral stalk), ATP15 (subunit epsilon, part of the central stalk), ATP16 (subunit delta, part of the central stalk), ATP17 (subunit f, part of the peripheral stalk), ATP18 (subunit i/j, part of the peripheral stalk), ATP19 (subunit k, dimer-specific, at interface between monomers), ATP20 (subunit g, at interface between monomers), TIM11 (subunit e, at interface between monomers).

Its subcellular location is the mitochondrion inner membrane. Mitochondrial membrane ATP synthase (F(1)F(0) ATP synthase or Complex V) produces ATP from ADP in the presence of a proton gradient across the membrane which is generated by electron transport complexes of the respiratory chain. F-type ATP synthases consist of two structural domains, F(1) - containing the extramembraneous catalytic core, and F(0) - containing the membrane proton channel, linked together by a central stalk and a peripheral stalk. During catalysis, ATP synthesis in the catalytic domain of F(1) is coupled via a rotary mechanism of the central stalk subunits to proton translocation. Subunits alpha/ATP1 and beta/ATP2 form the catalytic core in F(1). Rotation of the central stalk against the surrounding alpha/ATP1(3)beta/ATP2(3) subunits leads to hydrolysis of ATP in three separate catalytic sites on the beta/ATP2 subunits. Subunit alpha/ATP1 does not bear the catalytic high-affinity ATP-binding sites. The chain is ATP synthase subunit alpha, mitochondrial from Yarrowia lipolytica (strain CLIB 122 / E 150) (Yeast).